Consider the following 198-residue polypeptide: Ion-translocating oxidoreductase complex subunit B (198 aa).

The interval 1–26 (MTTIMIAVLAIALLATLFGAILGFAS) is hydrophobic. Residues 32–90 (EADPIVDQIDAILPQTQCGQCGYPGCRPYAEAIANGDSINKCPPGGQATIEKLADLMGV) form the 4Fe-4S domain. Residues C49, C52, C57, C73, C114, C117, C120, C124, C144, C147, C150, and C154 each contribute to the [4Fe-4S] cluster site. 4Fe-4S ferredoxin-type domains are found at residues 105–134 (KVAFIHEDMCIGCTKCIQACPVDAIVGGTK) and 135–164 (ALHTVIKDECTGCDLCVAPCPTDCIEMIPL).

This sequence belongs to the 4Fe4S bacterial-type ferredoxin family. RnfB subfamily. The complex is composed of six subunits: RnfA, RnfB, RnfC, RnfD, RnfE and RnfG. Requires [4Fe-4S] cluster as cofactor.

Its subcellular location is the cell inner membrane. In terms of biological role, part of a membrane-bound complex that couples electron transfer with translocation of ions across the membrane. The chain is Ion-translocating oxidoreductase complex subunit B from Vibrio vulnificus (strain CMCP6).